A 259-amino-acid polypeptide reads, in one-letter code: MFLLRTTTATTTPASLPLPLLSISSHLSLSKPSSFPVTSTKPLFTLRHSSSTPKIMSWLGRLGXGTRTPADASMDQSSIAQGPDDDIPAPGQQFAQFGAGCFWGVELAFQRVPGVSKTEVGYTQGFLHNPTYNDICSGTTNHSEVVRVQYDPKACSFDSLLDCFWERHDPTTLNRQGNDVGTQYRSGIYFYTPEQEKAAIEAKERHQKKLNRTVVTEILPAKKFYRAEEYHQQYLAKGGRFGFRQSTEKGCNDPIRCYG.

The disordered stretch occupies residues 66 to 90 (TRTPADASMDQSSIAQGPDDDIPAP).

It belongs to the MsrA Met sulfoxide reductase family.

The catalysed reaction is L-methionyl-[protein] + [thioredoxin]-disulfide + H2O = L-methionyl-(S)-S-oxide-[protein] + [thioredoxin]-dithiol. It catalyses the reaction [thioredoxin]-disulfide + L-methionine + H2O = L-methionine (S)-S-oxide + [thioredoxin]-dithiol. Functionally, has an important function as a repair enzyme for proteins that have been inactivated by oxidation. Catalyzes the reversible oxidation-reduction of methionine sulfoxide in proteins to methionine. This is Peptide methionine sulfoxide reductase from Lactuca sativa (Garden lettuce).